Consider the following 337-residue polypeptide: Tetraacyldisaccharide 4'-kinase (337 aa).

Position 72-79 (72-79 (TVGGSGKT)) interacts with ATP.

It belongs to the LpxK family.

The catalysed reaction is a lipid A disaccharide + ATP = a lipid IVA + ADP + H(+). The protein operates within glycolipid biosynthesis; lipid IV(A) biosynthesis; lipid IV(A) from (3R)-3-hydroxytetradecanoyl-[acyl-carrier-protein] and UDP-N-acetyl-alpha-D-glucosamine: step 6/6. Transfers the gamma-phosphate of ATP to the 4'-position of a tetraacyldisaccharide 1-phosphate intermediate (termed DS-1-P) to form tetraacyldisaccharide 1,4'-bis-phosphate (lipid IVA). In Shewanella sediminis (strain HAW-EB3), this protein is Tetraacyldisaccharide 4'-kinase.